The primary structure comprises 736 residues: Meiotic expression up-regulated protein 27 (736 aa).

Belongs to the UPF0300 family.

The polypeptide is Meiotic expression up-regulated protein 27 (meu27) (Schizosaccharomyces pombe (strain 972 / ATCC 24843) (Fission yeast)).